Reading from the N-terminus, the 215-residue chain is Probable phosphoglycerate mutase GpmB (215 aa).

Residues R8 to N15, Q21 to G22, R58, R60, E82 to M85, and G151 to M152 contribute to the substrate site. H9 functions as the Tele-phosphohistidine intermediate in the catalytic mechanism. The active-site Proton donor/acceptor is E82.

It belongs to the phosphoglycerate mutase family. GpmB subfamily.

The enzyme catalyses (2R)-2-phosphoglycerate = (2R)-3-phosphoglycerate. The protein operates within carbohydrate degradation; glycolysis; pyruvate from D-glyceraldehyde 3-phosphate: step 3/5. This chain is Probable phosphoglycerate mutase GpmB, found in Erwinia tasmaniensis (strain DSM 17950 / CFBP 7177 / CIP 109463 / NCPPB 4357 / Et1/99).